A 331-amino-acid chain; its full sequence is Lipoyl synthase (331 aa).

The disordered stretch occupies residues 1–33; it reads MSDALIATSSEAPQSPAEQYDPTRKQKSADKTA. A compositionally biased stretch (polar residues) spans 7–17; the sequence is ATSSEAPQSPA. Residues 21-33 show a composition bias toward basic and acidic residues; that stretch reads DPTRKQKSADKTA. [4Fe-4S] cluster-binding residues include cysteine 78, cysteine 83, cysteine 89, cysteine 104, cysteine 108, cysteine 111, and serine 318. The Radical SAM core domain maps to 89 to 307; sequence CFGKGTATFM…EEEAYKMGFT (219 aa).

It belongs to the radical SAM superfamily. Lipoyl synthase family. The cofactor is [4Fe-4S] cluster.

The protein resides in the cytoplasm. The enzyme catalyses [[Fe-S] cluster scaffold protein carrying a second [4Fe-4S](2+) cluster] + N(6)-octanoyl-L-lysyl-[protein] + 2 oxidized [2Fe-2S]-[ferredoxin] + 2 S-adenosyl-L-methionine + 4 H(+) = [[Fe-S] cluster scaffold protein] + N(6)-[(R)-dihydrolipoyl]-L-lysyl-[protein] + 4 Fe(3+) + 2 hydrogen sulfide + 2 5'-deoxyadenosine + 2 L-methionine + 2 reduced [2Fe-2S]-[ferredoxin]. It functions in the pathway protein modification; protein lipoylation via endogenous pathway; protein N(6)-(lipoyl)lysine from octanoyl-[acyl-carrier-protein]: step 2/2. Catalyzes the radical-mediated insertion of two sulfur atoms into the C-6 and C-8 positions of the octanoyl moiety bound to the lipoyl domains of lipoate-dependent enzymes, thereby converting the octanoylated domains into lipoylated derivatives. In Cupriavidus necator (strain ATCC 17699 / DSM 428 / KCTC 22496 / NCIMB 10442 / H16 / Stanier 337) (Ralstonia eutropha), this protein is Lipoyl synthase.